The following is a 390-amino-acid chain: Endothelial cell-selective adhesion molecule (390 aa).

The first 29 residues, 1–29, serve as a signal peptide directing secretion; it reads MISLPGPLVTNLLRFLFLGLSALAPPSRA. The Ig-like V-type domain maps to 30–143; that stretch reads ELQLHLPANQ…NGQASGHSIK (114 aa). Residues 30-248 lie on the Extracellular side of the membrane; sequence ELQLHLPANQ…LEVSTGPGAA (219 aa). N-linked (GlcNAc...) asparagine glycans are attached at residues Asn-108, Asn-169, Asn-213, and Asn-236. Residues 156–242 form the Ig-like C2-type domain; that stretch reads PSCRLQGVPR…AQCNVTLEVS (87 aa). A disulfide bridge links Cys-174 with Cys-224. Residues 249–269 form a helical membrane-spanning segment; it reads VVAGAVVGTLVGLGLLAGLVL. Residues 270–390 lie on the Cytoplasmic side of the membrane; sequence LYHRRGKALE…PAQSQAGSLV (121 aa). Phosphoserine is present on Ser-301. The segment at 316-365 is disordered; it reads ARALRPPHGPPRPGALTPTPSLSSQALPSPRLPTTDGANPQPISLIPGGV. 2 positions are modified to phosphothreonine: Thr-332 and Thr-334. Residues 333 to 342 show a composition bias toward polar residues; the sequence is PTPSLSSQAL. A phosphoserine mark is found at Ser-336, Ser-339, Ser-344, and Ser-371.

As to quaternary structure, interacts with MAGI1.

Its subcellular location is the cell junction. It is found in the adherens junction. It localises to the tight junction. The protein localises to the cell membrane. Can mediate aggregation most likely through a homophilic molecular interaction. In Macaca fascicularis (Crab-eating macaque), this protein is Endothelial cell-selective adhesion molecule (ESAM).